Reading from the N-terminus, the 781-residue chain is MKKDEKNNMDESLEEYDEENYTSELDDLPEYERELILAKRHEEYMKKKHRRMLLKNLHIDEKSKGNIHDDTNKSIETSNKRKGKLNNKKLKLKKKLYESDEEEENDKNDKNDDDQYDNTYQSDEDRKKSNNKKKEQSKKIKGDNESYNIDSISYVKYKKGKIKILEDDDEKNHEDEKKKTDIIDHVSVTDDSYTDSSYKNKKKSKYKKGDTNQTDKTSKKNKNDKTNKTNKTNVSIKTKKHREDYSDDSMDDYHSTSSYEHEKSSDVHYNKKEKKIQLKVISEESHLDNTKNKTGKGLNKILIEKEKKKKKKDLHIVDSVHKNKEDGKNVITDIFEKNEKINKDKELELPQTPERLIHLYKEEKKIKMDIYNYMTYDIITYFQLKKTFLLDMCEHVHFSYHVIGHMIKIIDISKLNKVTNQDVQNTNNKKKIDTANENKKKIFFITNVIKSEPYFSTDRNTNIKFEVAHLENLAHSKFFKKIKNIMYQNKKISMDEIKSNEYYETYICDMNNISDQKFTIDEYNHIKLFSIDLDVLKTFHLFLKEKNEDLKNFRYTEKQLQDLFEKKKQKSFYEIYTNNKSIDNLPITRITVQREICSIQREIDKLNFDKKKTNVNDTYTLSKLNNQINELTKKINILRGNLDKARKNHAAMKSNDQFAQEKNMTKEKSRTNIKSTQKDDATNKFLGVKEMDISYFSKQIYDEKTNFNNMLSSKFINLPLDVHHKVVHHFLLGTIQNNDAVFYDDPSHKIKKELDAEIDKLLGLHGNRHITLFDDIKKNYE.

Disordered regions lie at residues 1 to 27 (MKKDEKNNMDESLEEYDEENYTSELDD) and 56 to 268 (NLHI…SDVH). Residues 11–27 (ESLEEYDEENYTSELDD) show a composition bias toward acidic residues. The segment covering 57–73 (LHIDEKSKGNIHDDTNK) has biased composition (basic and acidic residues). Residues 80-94 (KRKGKLNNKKLKLKK) show a composition bias toward basic residues. Residues 99–116 (SDEEEENDKNDKNDDDQY) show a composition bias toward acidic residues. Composition is skewed to basic and acidic residues over residues 123 to 144 (DEDRKKSNNKKKEQSKKIKGDN), 170 to 188 (EKNHEDEKKKTDIIDHVSV), 216 to 227 (KTSKKNKNDKTN), and 251 to 268 (DDYHSTSSYEHEKSSDVH). A coiled-coil region spans residues 616–655 (NDTYTLSKLNNQINELTKKINILRGNLDKARKNHAAMKSN).

This is an uncharacterized protein from Plasmodium falciparum (isolate 3D7).